A 304-amino-acid polypeptide reads, in one-letter code: Acetyl-coenzyme A carboxylase carboxyl transferase subunit beta (304 aa).

The region spanning 23-292 (VWTKCDSCGQ…PNPDAPREGV (270 aa)) is the CoA carboxyltransferase N-terminal domain. C27, C30, C46, and C49 together coordinate Zn(2+). The C4-type zinc finger occupies 27 to 49 (CDSCGQVLYRAELERNLEVCPKC). The disordered stretch occupies residues 284 to 304 (NPDAPREGVVVPPAPGQESEA).

The protein belongs to the AccD/PCCB family. As to quaternary structure, acetyl-CoA carboxylase is a heterohexamer composed of biotin carboxyl carrier protein (AccB), biotin carboxylase (AccC) and two subunits each of ACCase subunit alpha (AccA) and ACCase subunit beta (AccD). The cofactor is Zn(2+).

The protein localises to the cytoplasm. The catalysed reaction is N(6)-carboxybiotinyl-L-lysyl-[protein] + acetyl-CoA = N(6)-biotinyl-L-lysyl-[protein] + malonyl-CoA. The protein operates within lipid metabolism; malonyl-CoA biosynthesis; malonyl-CoA from acetyl-CoA: step 1/1. Its function is as follows. Component of the acetyl coenzyme A carboxylase (ACC) complex. Biotin carboxylase (BC) catalyzes the carboxylation of biotin on its carrier protein (BCCP) and then the CO(2) group is transferred by the transcarboxylase to acetyl-CoA to form malonyl-CoA. In Salmonella arizonae (strain ATCC BAA-731 / CDC346-86 / RSK2980), this protein is Acetyl-coenzyme A carboxylase carboxyl transferase subunit beta.